A 100-amino-acid chain; its full sequence is UPF0213 protein YhbQ (100 aa).

The GIY-YIG domain occupies T2–R77.

Belongs to the UPF0213 family.

The polypeptide is UPF0213 protein YhbQ (Escherichia coli O139:H28 (strain E24377A / ETEC)).